A 125-amino-acid polypeptide reads, in one-letter code: Large ribosomal subunit protein bL12 (125 aa).

The protein belongs to the bacterial ribosomal protein bL12 family. As to quaternary structure, homodimer. Part of the ribosomal stalk of the 50S ribosomal subunit. Forms a multimeric L10(L12)X complex, where L10 forms an elongated spine to which 2 to 4 L12 dimers bind in a sequential fashion. Binds GTP-bound translation factors.

Functionally, forms part of the ribosomal stalk which helps the ribosome interact with GTP-bound translation factors. Is thus essential for accurate translation. The protein is Large ribosomal subunit protein bL12 of Campylobacter lari (strain RM2100 / D67 / ATCC BAA-1060).